Consider the following 174-residue polypeptide: Probable carboxylesterase Culp5 (174 aa).

Serine 67 functions as the Nucleophile in the catalytic mechanism. Residues cysteine 137 and cysteine 144 are joined by a disulfide bond. Aspartate 141 is an active-site residue. Histidine 153 serves as the catalytic Proton donor/acceptor.

Belongs to the cutinase family.

Its function is as follows. Does not exhibit cutinase activity. The chain is Probable carboxylesterase Culp5 from Mycobacterium tuberculosis (strain ATCC 25618 / H37Rv).